The primary structure comprises 180 residues: Bifunctional protein PyrR (180 aa).

Positions 101 to 113 (VILVDDVLYTGRT) match the PRPP-binding motif.

It belongs to the purine/pyrimidine phosphoribosyltransferase family. PyrR subfamily. In terms of assembly, homodimer and homohexamer; in equilibrium.

The enzyme catalyses UMP + diphosphate = 5-phospho-alpha-D-ribose 1-diphosphate + uracil. In terms of biological role, regulates transcriptional attenuation of the pyrimidine nucleotide (pyr) operon by binding in a uridine-dependent manner to specific sites on pyr mRNA. This disrupts an antiterminator hairpin in the RNA and favors formation of a downstream transcription terminator, leading to a reduced expression of downstream genes. Functionally, also displays a weak uracil phosphoribosyltransferase activity which is not physiologically significant. This Bacillus cytotoxicus (strain DSM 22905 / CIP 110041 / 391-98 / NVH 391-98) protein is Bifunctional protein PyrR.